A 206-amino-acid chain; its full sequence is Transmembrane emp24 domain-containing protein bai (206 aa).

The signal sequence occupies residues 1-20; it reads MARAALIVCLLMACAWSSHA. Over 21–172 the chain is Lumenal; it reads VMFKLSPNTQ…RDTNEKTNSR (152 aa). One can recognise a GOLD domain in the interval 30 to 140; the sequence is QKCLKEDIQA…LKPLEVDLKR (111 aa). The chain crosses the membrane as a helical span at residues 173–193; sequence VLFFSIFSMCCLLGLATWQVL. At 194–206 the chain is on the cytoplasmic side; that stretch reads YLRRYFKAKKLIE.

It belongs to the EMP24/GP25L family.

The protein localises to the membrane. Functionally, eca and bai are essential, though not redundant, for dorsoventral patterning of the embryo. Specifically required during early embryogenesis for the activity of maternal tkv, while the zygotic tkv is not affected. The sequence is that of Transmembrane emp24 domain-containing protein bai from Drosophila erecta (Fruit fly).